Reading from the N-terminus, the 632-residue chain is Tail spike protein (632 aa).

The region spanning Ser505 to Leu630 is the Peptidase S74 domain.

Homotrimer. Post-translationally, proteolytic cleavage and release of the chaperone in the host cytosol stabilizes the folded protein. The cleavage gives rise to the mature tail spike protein but is not essential for catalytic activity.

The protein localises to the virion. In terms of biological role, functions as a receptor binding protein (RBP) and probably mediates the attachment to the host capsular exopolysaccharides. Displays a depolymerase activity that specifically degrades the K5-type polysaccharides of Escherichia coli capsule. Its function is as follows. The C-terminal chaperone protein mediates homotrimerization and proper folding of the catalytic trimer. This is Tail spike protein (kflA) from Escherichia virus K5 (Bacteriophage K5).